Here is a 351-residue protein sequence, read N- to C-terminus: Nicotinate-nucleotide--dimethylbenzimidazole phosphoribosyltransferase (351 aa).

Residue Glu317 is the Proton acceptor of the active site.

The protein belongs to the CobT family.

It carries out the reaction 5,6-dimethylbenzimidazole + nicotinate beta-D-ribonucleotide = alpha-ribazole 5'-phosphate + nicotinate + H(+). The protein operates within nucleoside biosynthesis; alpha-ribazole biosynthesis; alpha-ribazole from 5,6-dimethylbenzimidazole: step 1/2. In terms of biological role, catalyzes the synthesis of alpha-ribazole-5'-phosphate from nicotinate mononucleotide (NAMN) and 5,6-dimethylbenzimidazole (DMB). In Pseudomonas putida (strain ATCC 47054 / DSM 6125 / CFBP 8728 / NCIMB 11950 / KT2440), this protein is Nicotinate-nucleotide--dimethylbenzimidazole phosphoribosyltransferase.